Consider the following 162-residue polypeptide: Precursor protein UG (162 aa).

The N-terminal stretch at 1–19 (MERILLCFIVATLVAISMA) is a signal peptide. Residues 20–23 (NPRP) constitute a propeptide that is removed on maturation. Intrachain disulfides connect Cys30–Cys42 and Cys33–Cys49. The propeptide occupies 56–59 (VPKP). Intrachain disulfides connect Cys66–Cys78 and Cys69–Cys85. A propeptide spanning residues 92–95 (VPKP) is cleaved from the precursor. 2 disulfide bridges follow: Cys102/Cys114 and Cys105/Cys121. The propeptide occupies 128–131 (VPKP). Intrachain disulfides connect Cys138/Cys150 and Cys141/Cys157.

Belongs to the sea anemone BBH family.

It is found in the secreted. The protein localises to the nematocyst. Functionally, affects the ASIC3 channel (ACCN3) and produces analgesic effects. It produces a reversible inhibition effect on both the transient and the sustained current of human ASIC3 channels expressed in X.laevis oocytes. It completely blocks the transient component (IC(50)=10 uM) and partially (48%) inhibits the amplitude of the sustained component (IC(50)=1.44 uM). Using in vivo tests in mice, it reverses inflammatory and acid-induced pain. In terms of biological role, does not affect the ASIC3 channel. Does not cause lethality or paralysis of noble crayfish (A.astacus) at a dose of 1 mg/kg. This Urticina grebelnyi (Painted anemone) protein is Precursor protein UG.